The primary structure comprises 278 residues: Protein Rv2133c (278 aa).

The polypeptide is Protein Rv2133c (Mycobacterium tuberculosis (strain ATCC 25618 / H37Rv)).